A 100-amino-acid chain; its full sequence is Small ribosomal subunit protein uS14c (100 aa).

It belongs to the universal ribosomal protein uS14 family. As to quaternary structure, part of the 30S ribosomal subunit.

The protein localises to the plastid. It localises to the chloroplast. Functionally, binds 16S rRNA, required for the assembly of 30S particles. This is Small ribosomal subunit protein uS14c from Barbarea verna (Land cress).